The sequence spans 171 residues: Co-chaperone protein HscB (171 aa).

The J domain occupies 2-74 (DYFTLFGLPA…LMRAEYLLSL (73 aa)).

This sequence belongs to the HscB family. As to quaternary structure, interacts with HscA and stimulates its ATPase activity. Interacts with IscU.

In terms of biological role, co-chaperone involved in the maturation of iron-sulfur cluster-containing proteins. Seems to help targeting proteins to be folded toward HscA. This is Co-chaperone protein HscB from Shigella flexneri serotype 5b (strain 8401).